The chain runs to 348 residues: ECA polysaccharide chain length modulation protein (348 aa).

Over 1–30 the chain is Cytoplasmic; sequence MTQPMPGKPAEDAENELDIRGLFRTLWAGK. The chain crosses the membrane as a helical span at residues 31-51; that stretch reads LWIIGMGLAFALIALAYTFFA. Over 52–322 the chain is Periplasmic; the sequence is RQEWSSTAIT…EPVKRDSPRR (271 aa). The chain crosses the membrane as a helical span at residues 323-343; sequence AFLMIMWGIVGGLIGAGVALT. Topologically, residues 344 to 348 are cytoplasmic; that stretch reads RRCSK.

The protein belongs to the WzzB/Cld/Rol family. In terms of assembly, homooctamer. Probably part of a complex composed of WzxE, WzyE and WzzE.

Its subcellular location is the cell inner membrane. The protein operates within bacterial outer membrane biogenesis; enterobacterial common antigen biosynthesis. Its function is as follows. Modulates the polysaccharide chain length of enterobacterial common antigen (ECA). This is ECA polysaccharide chain length modulation protein from Escherichia coli O157:H7.